Consider the following 89-residue polypeptide: Diphthamide biosynthesis protein 3 (89 aa).

The region spanning 5-61 (FYDEIELEDMSYDDEKDVFHYPCPCGDRFEITRQQLKDAEDVARCPSCSLIIRVVFD) is the DPH-type MB domain. Fe cation is bound by residues cysteine 27, cysteine 29, cysteine 49, and cysteine 52.

Belongs to the DPH3 family. As to quaternary structure, component of the 2-(3-amino-3-carboxypropyl)histidine synthase complex composed of DPH1, DPH2, DPH3 and a NADH-dependent reductase, predominantly CBR1. Fe(2+) is required as a cofactor.

The protein resides in the cytoplasm. Its subcellular location is the nucleus. It carries out the reaction [3Fe-4S](1+)-[protein] + Fe(2+)-[Dph3] = [3Fe-4S](0)-[protein] + Fe(3+)-[Dph3]. It catalyses the reaction 2 [3Fe-4S](0)-[protein] + 2 Fe(2+)-[Dph3] + NADH = 2 [4Fe-4S](1+)-[protein] + 2 [Dph3] + NAD(+) + H(+). Its pathway is protein modification; peptidyl-diphthamide biosynthesis. Required for the first step of diphthamide biosynthesis, a post-translational modification of histidine which occurs in elongation factor 2. DPH1 and DPH2 transfer a 3-amino-3-carboxypropyl (ACP) group from S-adenosyl-L-methionine (SAM) to a histidine residue, the reaction is assisted by a reduction system comprising KTI11/DPH3 and a NADH-dependent reductase, predominantly CBR1. Acts as an electron donor to reduce the Fe-S cluster in DPH1-DPH2 keeping the [4Fe-4S] clusters in the active and reduced state. Restores iron to DPH1-DPH2 iron-sulfur clusters which have degraded from [4Fe-4S] to [3Fe-4S] by donating an iron atom to reform [4Fe-4S] clusters, in a manner dependent on the presence of elongation factor 2 and SAM. Associates with the elongator complex and is required for tRNA Wobble base modifications mediated by the elongator complex. The elongator complex is required for multiple tRNA modifications, including mcm5U (5-methoxycarbonylmethyl uridine), mcm5s 2U (5-methoxycarbonylmethyl-2-thiouridine), and ncm5U (5-carbamoylmethyl uridine). In Mycosarcoma maydis (Corn smut fungus), this protein is Diphthamide biosynthesis protein 3 (DPH3).